The following is a 200-amino-acid chain: MSSGLPTLERSIELFSRLPGVGRKSAQRMVYHLLKEGGREATLLGQGLLALSERIHFCEVCHNLAEEGLCAICQDSKRDHGLICVVEEPVDVLAMERAGAYRGLYHVLGGRLSPMDGIGPDALYLDALLERLQQGGVRELIIATNPTVAGEATAHYITQLAQPLTIDISRLAYGMPMGGELEYLDESTLFQALQGRRGVL.

The segment at 58-73 (CEVCHNLAEEGLCAIC) adopts a C4-type zinc-finger fold. The Toprim domain occupies 81–176 (GLICVVEEPV…DISRLAYGMP (96 aa)).

The protein belongs to the RecR family.

In terms of biological role, may play a role in DNA repair. It seems to be involved in an RecBC-independent recombinational process of DNA repair. It may act with RecF and RecO. The protein is Recombination protein RecR of Magnetococcus marinus (strain ATCC BAA-1437 / JCM 17883 / MC-1).